Consider the following 966-residue polypeptide: Phosphoenolpyruvate carboxylase, housekeeping isozyme (966 aa).

Residue serine 11 is modified to Phosphoserine. Catalysis depends on residues histidine 172 and lysine 601.

It belongs to the PEPCase type 1 family. In terms of assembly, homotetramer. The cofactor is Mg(2+).

It is found in the cytoplasm. It carries out the reaction oxaloacetate + phosphate = phosphoenolpyruvate + hydrogencarbonate. With respect to regulation, by light-reversible phosphorylation. Through the carboxylation of phosphoenolpyruvate (PEP) it forms oxaloacetate, a four-carbon dicarboxylic acid source for the tricarboxylic acid cycle. This chain is Phosphoenolpyruvate carboxylase, housekeeping isozyme, found in Saccharum hybrid (Sugarcane).